The sequence spans 62 residues: DNA gyrase inhibitor YacG (62 aa).

Positions 8, 11, 27, and 31 each coordinate Zn(2+).

Belongs to the DNA gyrase inhibitor YacG family. In terms of assembly, interacts with GyrB. Zn(2+) is required as a cofactor.

Inhibits all the catalytic activities of DNA gyrase by preventing its interaction with DNA. Acts by binding directly to the C-terminal domain of GyrB, which probably disrupts DNA binding by the gyrase. The protein is DNA gyrase inhibitor YacG of Actinobacillus pleuropneumoniae serotype 5b (strain L20).